A 123-amino-acid chain; its full sequence is MGTATGASYFQRGSLFWFTVIAVSFSYYTWVVFWPQSIPYQSLGPLGPFTKYLVDHYHTLLRNGYWLAWLVHVGESLYALVLCRRKGITDSQAQLLWFLQTFLFGVASLSILFAYRPKHQKHN.

A run of 3 helical transmembrane segments spans residues 15 to 35 (LFWF…VFWP), 63 to 83 (NGYW…LVLC), and 95 to 115 (LLWF…LFAY).

It is found in the membrane. The protein is Transmembrane protein 254 (Tmem254) of Rattus norvegicus (Rat).